The following is a 145-amino-acid chain: Ribonuclease P protein component (145 aa).

A disordered region spans residues 119–145 (PLPAAPGTMPPARTVRPSSPSPTEPEL).

Belongs to the RnpA family. Consists of a catalytic RNA component (M1 or rnpB) and a protein subunit.

It catalyses the reaction Endonucleolytic cleavage of RNA, removing 5'-extranucleotides from tRNA precursor.. In terms of biological role, RNaseP catalyzes the removal of the 5'-leader sequence from pre-tRNA to produce the mature 5'-terminus. It can also cleave other RNA substrates such as 4.5S RNA. The protein component plays an auxiliary but essential role in vivo by binding to the 5'-leader sequence and broadening the substrate specificity of the ribozyme. The protein is Ribonuclease P protein component of Xanthomonas euvesicatoria pv. vesicatoria (strain 85-10) (Xanthomonas campestris pv. vesicatoria).